The chain runs to 689 residues: Glycine--tRNA ligase beta subunit (689 aa).

This sequence belongs to the class-II aminoacyl-tRNA synthetase family. Tetramer of two alpha and two beta subunits.

It is found in the cytoplasm. The catalysed reaction is tRNA(Gly) + glycine + ATP = glycyl-tRNA(Gly) + AMP + diphosphate. The protein is Glycine--tRNA ligase beta subunit of Hamiltonella defensa subsp. Acyrthosiphon pisum (strain 5AT).